A 160-amino-acid chain; its full sequence is Serine-protein kinase RsbW (160 aa).

The protein belongs to the anti-sigma-factor family.

It carries out the reaction L-seryl-[protein] + ATP = O-phospho-L-seryl-[protein] + ADP + H(+). It catalyses the reaction L-threonyl-[protein] + ATP = O-phospho-L-threonyl-[protein] + ADP + H(+). In terms of biological role, negative regulator of sigma-B activity. Phosphorylates and inactivates its specific antagonist protein, RsbV. Upon phosphorylation of RsbV, RsbW is released and binds to sigma-B, thereby blocking its ability to form an RNA polymerase holoenzyme (E-sigma-B). In Bacillus licheniformis, this protein is Serine-protein kinase RsbW.